A 431-amino-acid polypeptide reads, in one-letter code: Glutamate-1-semialdehyde 2,1-aminomutase (431 aa).

Residue Lys-269 is modified to N6-(pyridoxal phosphate)lysine.

It belongs to the class-III pyridoxal-phosphate-dependent aminotransferase family. HemL subfamily. Homodimer. It depends on pyridoxal 5'-phosphate as a cofactor.

The protein resides in the cytoplasm. It carries out the reaction (S)-4-amino-5-oxopentanoate = 5-aminolevulinate. It participates in porphyrin-containing compound metabolism; protoporphyrin-IX biosynthesis; 5-aminolevulinate from L-glutamyl-tRNA(Glu): step 2/2. This Francisella tularensis subsp. mediasiatica (strain FSC147) protein is Glutamate-1-semialdehyde 2,1-aminomutase.